A 742-amino-acid polypeptide reads, in one-letter code: MRPGLPSYLIILAVCLFSHLLSSRYGAEAVSEPLDKAFHLLLNTYGRPIRFLRENTTQCTYNSSLRNSTVVRENAISFNFFQSYNQYYVFHMPRCLFAGPLAEQFLNQVDLTETLERYQQRLNTYALVSKDLASYRSFSQQLKAQDSLGEQPTTVPPPIDLSIPHVWMPPQTTPHGWTESHTTSGLHRPHFNQTCILFDGHDLLFSTVTPCLHQGFYLIDELRYVKITLTEDFFVVTVSIDDDTPMLLIFGHLPRVLFKAPYQRDNFILRQTEKHELLVLVKKDQLNRHSYLKDPDFLDAALDFNYLDLSALLRNSFHRYAVDVLKSGRCQMLDRRTVEMAFAYALALFAAARQEEAGAQVSVPRALDRQAALLQIQEFMITCLSQTPPRTTLLLYPTAVDLAKRALWTPNQITDITSLVRLVYILSKQNQQHLIPQWALRQIADFALKLHKTHLASFLSAFARQELYLMGSLVHSMLVHTTERREIFIVETGLCSLAELSHFTQLLAHPHHEYLSDLYTPCSSSGRRDHSLERLTRLFPDATVPATVPAALSILSTMQPSTLETFPDLFCLPLGESFSALTVSEHVSYIVTNQYLIKGISYPVSTTVVGQSLIITQTDSQTKCELTRNMHTTHSITVALNISLENCAFCQSALLEYDDTQGVINIMYMHDSDDVLFALDPYNEVVVSSPRTHYLMLLKNGTVLEVTDVVVDATDSRLLMMSVYALSAIIGIYLLYRMLKTC.

The first 23 residues, 1–23 (MRPGLPSYLIILAVCLFSHLLSS), serve as a signal peptide directing secretion. Residues 24 to 719 (RYGAEAVSEP…VVDATDSRLL (696 aa)) lie on the Virion surface side of the membrane. Residues Asn55, Asn62, Asn67, and Asn192 are each glycosylated (N-linked (GlcNAc...) asparagine; by host). Cys195 and Cys211 are joined by a disulfide. Residues 217-280 (YLIDELRYVK…QTEKHELLVL (64 aa)) are interaction with gL. 3 disulfides stabilise this stretch: Cys330-Cys383, Cys495-Cys522, and Cys571-Cys624. N-linked (GlcNAc...) asparagine; by host glycans are attached at residues Asn641 and Asn700. Residues 720 to 740 (MMSVYALSAIIGIYLLYRMLK) traverse the membrane as a helical segment. At 741–742 (TC) the chain is on the intravirion side.

This sequence belongs to the herpesviridae glycoprotein H family. Interacts with glycoprotein L (gL); this interaction is necessary for the correct processing and cell surface expression of gH. The heterodimer gH/gL seems to interact with gB trimers during fusion. Forms the envelope pentamer complex (PC) composed of gH, gL, UL128, UL130, and UL131A. The pentamer interacts with host NRP2. Forms the envelope trimer complex composed of gH, gL, and gO. The trimer interacts with host PDGFRA. The trimer also interacts with host EPHA2. The trimer also interacts with host TGFBR3. Interacts with UL116. In terms of processing, N-glycosylated, O-glycosylated, and sialylated.

It localises to the virion membrane. Its subcellular location is the host cell membrane. It is found in the host endosome membrane. The heterodimer glycoprotein H-glycoprotein L is required for the fusion of viral and plasma membranes leading to virus entry into the host cell. Following initial binding to host receptor, membrane fusion is mediated by the fusion machinery composed of gB and the heterodimer gH/gL. May also be involved in the fusion between the virion envelope and the outer nuclear membrane during virion morphogenesis. In human cytomegalovirus, forms two distincts complexes to mediate viral entry, a trimer and a pentamer at the surface of the virion envelope. The gH-gL-gO trimer is required for infection in fibroblasts by interacting with host PDGFRA, and in glioblastoma cells by interacting with host EPHA2. Thsi trimer may also be required in other cell types using host TGFBR3. The gH-gL-UL128-UL130-UL131A pentamer is essential for viral entry in epithelial, endothelial and myeloid cells via interaction with host NRP2. The polypeptide is Envelope glycoprotein H (Human cytomegalovirus (strain Merlin) (HHV-5)).